A 731-amino-acid chain; its full sequence is 1,4-alpha-glucan branching enzyme GlgB (731 aa).

Catalysis depends on Asp412, which acts as the Nucleophile. Residue Glu465 is the Proton donor of the active site.

The protein belongs to the glycosyl hydrolase 13 family. GlgB subfamily. Monomer.

The catalysed reaction is Transfers a segment of a (1-&gt;4)-alpha-D-glucan chain to a primary hydroxy group in a similar glucan chain.. Its pathway is glycan biosynthesis; glycogen biosynthesis. Its function is as follows. Catalyzes the formation of the alpha-1,6-glucosidic linkages in glycogen by scission of a 1,4-alpha-linked oligosaccharide from growing alpha-1,4-glucan chains and the subsequent attachment of the oligosaccharide to the alpha-1,6 position. This Bordetella bronchiseptica (strain ATCC BAA-588 / NCTC 13252 / RB50) (Alcaligenes bronchisepticus) protein is 1,4-alpha-glucan branching enzyme GlgB.